The sequence spans 233 residues: Biosynthetic peptidoglycan transglycosylase (233 aa).

Residues 17–37 traverse the membrane as a helical segment; sequence IVLAVLALVVLPYVLIFFYLL.

The protein belongs to the glycosyltransferase 51 family.

It localises to the cell inner membrane. The enzyme catalyses [GlcNAc-(1-&gt;4)-Mur2Ac(oyl-L-Ala-gamma-D-Glu-L-Lys-D-Ala-D-Ala)](n)-di-trans,octa-cis-undecaprenyl diphosphate + beta-D-GlcNAc-(1-&gt;4)-Mur2Ac(oyl-L-Ala-gamma-D-Glu-L-Lys-D-Ala-D-Ala)-di-trans,octa-cis-undecaprenyl diphosphate = [GlcNAc-(1-&gt;4)-Mur2Ac(oyl-L-Ala-gamma-D-Glu-L-Lys-D-Ala-D-Ala)](n+1)-di-trans,octa-cis-undecaprenyl diphosphate + di-trans,octa-cis-undecaprenyl diphosphate + H(+). It participates in cell wall biogenesis; peptidoglycan biosynthesis. Its function is as follows. Peptidoglycan polymerase that catalyzes glycan chain elongation from lipid-linked precursors. This is Biosynthetic peptidoglycan transglycosylase from Rhizobium etli (strain ATCC 51251 / DSM 11541 / JCM 21823 / NBRC 15573 / CFN 42).